We begin with the raw amino-acid sequence, 464 residues long: MASIALKTFTGLRQSSPENNSITLSKSLPFTQTHRRLRINASKSSPRVNGRNLRVAVVGGGPAGGAAAETLAKGGIETFLIERKMDNCKPCGGAIPLCMVGEFDLPLDIIDRKVTKMKMISPSNVAVDIGQTLKPHEYIGMVRREVLDAYLRDRAAEAGASVLNGLFLKMDMPKAPNAPYVLHYTAYDSKTNGAGEKRTLEVDAVIGADGANSRVAKSINAGDYEYAIAFQERIKISDDKMKYYENLAEMYVGDDVSPDFYGWVFPKCDHVAVGTGTVTHKADIKKFQLATRLRADSKITGGKIIRVEAHPIPEHPRPRRLQDRVALVGDAAGYVTKCSGEGIYFAAKSGRMCAEAIVEGSEMGKRMVDESDLRKYLEKWDKTYWPTYKVLDILQKVFYRSNPAREAFVEMCADEYVQKMTFDSYLYKKVAPGNPIEDLKLAVNTIGSLVRANALRREMDKLSV.

The transit peptide at 1–54 directs the protein to the chloroplast; sequence MASIALKTFTGLRQSSPENNSITLSKSLPFTQTHRRLRINASKSSPRVNGRNLR.

Belongs to the geranylgeranyl reductase family. ChlP subfamily.

The protein localises to the plastid. The protein resides in the chloroplast. The catalysed reaction is phytyl diphosphate + 3 NADP(+) = geranylgeranyl diphosphate + 3 NADPH + 3 H(+). The protein operates within porphyrin-containing compound metabolism; chlorophyll biosynthesis. It functions in the pathway cofactor biosynthesis; tocopherol biosynthesis. Its function is as follows. Catalyzes the reduction of geranylgeranyl diphosphate to phytyl diphosphate, providing phytol for both tocopherol and chlorophyll synthesis. The protein is Geranylgeranyl diphosphate reductase, chloroplastic (CHLP) of Nicotiana tabacum (Common tobacco).